Consider the following 149-residue polypeptide: Transcriptional repressor NrdR (149 aa).

A zinc finger lies at 3 to 34 (CPFCSHLETQVIETRVFEDAASIRRRRQCAAC). The region spanning 49-139 (PAVVKKDGRR…VYRSFEGIDD (91 aa)) is the ATP-cone domain.

Belongs to the NrdR family. Zn(2+) is required as a cofactor.

Its function is as follows. Negatively regulates transcription of bacterial ribonucleotide reductase nrd genes and operons by binding to NrdR-boxes. In Verminephrobacter eiseniae (strain EF01-2), this protein is Transcriptional repressor NrdR.